The following is a 95-amino-acid chain: U8-barytoxin-Tl1a (95 aa).

The first 21 residues, 1 to 21 (MKTLVLVAVLGLASLYLLSYA), serve as a signal peptide directing secretion. Residues 22–50 (SEVQQLSVAEEEFGALIDAFGGLLETEER) constitute a propeptide that is removed on maturation. Cystine bridges form between C57–C71, C64–C76, and C70–C86.

Belongs to the neurotoxin 10 (Hwtx-1) family. 26 (ICK-1) subfamily. In terms of tissue distribution, expressed by the venom gland.

Its subcellular location is the secreted. Its function is as follows. Ion channel inhibitor. This chain is U8-barytoxin-Tl1a, found in Trittame loki (Brush-footed trapdoor spider).